The following is a 311-amino-acid chain: Aspartate carbamoyltransferase catalytic subunit (311 aa).

Positions 58 and 59 each coordinate carbamoyl phosphate. K86 lines the L-aspartate pocket. Positions 108, 136, and 139 each coordinate carbamoyl phosphate. R169 and R224 together coordinate L-aspartate. The carbamoyl phosphate site is built by G265 and P266.

The protein belongs to the aspartate/ornithine carbamoyltransferase superfamily. ATCase family. In terms of assembly, heterododecamer (2C3:3R2) of six catalytic PyrB chains organized as two trimers (C3), and six regulatory PyrI chains organized as three dimers (R2).

The catalysed reaction is carbamoyl phosphate + L-aspartate = N-carbamoyl-L-aspartate + phosphate + H(+). The protein operates within pyrimidine metabolism; UMP biosynthesis via de novo pathway; (S)-dihydroorotate from bicarbonate: step 2/3. Its function is as follows. Catalyzes the condensation of carbamoyl phosphate and aspartate to form carbamoyl aspartate and inorganic phosphate, the committed step in the de novo pyrimidine nucleotide biosynthesis pathway. The protein is Aspartate carbamoyltransferase catalytic subunit of Geotalea daltonii (strain DSM 22248 / JCM 15807 / FRC-32) (Geobacter daltonii).